The chain runs to 104 residues: Holotricin-3 (104 aa).

Positions 1-20 (MNKLIILGLACIIAVASAMP) are cleaved as a signal peptide. The interval 22-104 (GPGDGHGGGH…HHGGYQTHGY (83 aa)) is disordered. The segment covering 23–97 (PGDGHGGGHG…PGGHGGGHHG (75 aa)) has biased composition (gly residues). A run of 18 repeats spans residues 27–30 (HGGG), 31–34 (HGGG), 35–38 (HGGG), 39–42 (HGNG), 43–46 (QGGG), 47–50 (HGHG), 51–54 (PGGG), 55–58 (FGGG), 59–62 (HGGG), 63–66 (HGGG), 67–70 (GRGG), 71–74 (GGSG), 75–78 (GGGS), 79–82 (PGHG), 83–86 (AGGG), 87–90 (YPGG), 91–94 (HGGG), and 96–98 (HGG). The 18 X 4 AA approximate tandem repeats of H-G-G-G stretch occupies residues 27 to 98 (HGGGHGGGHG…GGHGGGHHGG (72 aa)).

This sequence to T.molitor tenecin 3.

Its subcellular location is the secreted. Functionally, has antifungal activity against C.albicans. This Holotrichia diomphalia (Korean black chafer) protein is Holotricin-3.